We begin with the raw amino-acid sequence, 499 residues long: Glycerol kinase (499 aa).

Thr-13 contacts ADP. Residues Thr-13, Thr-14, and Ser-15 each coordinate ATP. A sn-glycerol 3-phosphate-binding site is contributed by Thr-13. Position 17 (Arg-17) interacts with ADP. Sn-glycerol 3-phosphate-binding residues include Arg-83, Glu-84, Tyr-135, and Asp-244. The glycerol site is built by Arg-83, Glu-84, Tyr-135, Asp-244, and Gln-245. Residues Thr-266 and Gly-309 each coordinate ADP. Thr-266, Gly-309, Gln-313, and Gly-410 together coordinate ATP. ADP-binding residues include Gly-410 and Asn-414.

This sequence belongs to the FGGY kinase family.

The enzyme catalyses glycerol + ATP = sn-glycerol 3-phosphate + ADP + H(+). It participates in polyol metabolism; glycerol degradation via glycerol kinase pathway; sn-glycerol 3-phosphate from glycerol: step 1/1. Inhibited by fructose 1,6-bisphosphate (FBP). Key enzyme in the regulation of glycerol uptake and metabolism. Catalyzes the phosphorylation of glycerol to yield sn-glycerol 3-phosphate. The sequence is that of Glycerol kinase from Paraburkholderia phymatum (strain DSM 17167 / CIP 108236 / LMG 21445 / STM815) (Burkholderia phymatum).